The chain runs to 407 residues: Na(+)-translocating NADH-quinone reductase subunit F (407 aa).

A helical membrane pass occupies residues 3–23; sequence IILGVVMFTLIVLVLSGLILA. Residues 32–126 enclose the 2Fe-2S ferredoxin-type domain; sequence GDVVIEINNE…NMKIELPEEI (95 aa). [2Fe-2S] cluster contacts are provided by cysteine 69, cysteine 75, cysteine 78, and cysteine 110. An FAD-binding FR-type domain is found at 129–269; sequence VKKWECEVIS…SGPFGEFFAK (141 aa).

This sequence belongs to the NqrF family. In terms of assembly, composed of six subunits; NqrA, NqrB, NqrC, NqrD, NqrE and NqrF. [2Fe-2S] cluster serves as cofactor. It depends on FAD as a cofactor.

Its subcellular location is the cell inner membrane. It carries out the reaction a ubiquinone + n Na(+)(in) + NADH + H(+) = a ubiquinol + n Na(+)(out) + NAD(+). NQR complex catalyzes the reduction of ubiquinone-1 to ubiquinol by two successive reactions, coupled with the transport of Na(+) ions from the cytoplasm to the periplasm. The first step is catalyzed by NqrF, which accepts electrons from NADH and reduces ubiquinone-1 to ubisemiquinone by a one-electron transfer pathway. The polypeptide is Na(+)-translocating NADH-quinone reductase subunit F (Klebsiella pneumoniae subsp. pneumoniae (strain ATCC 700721 / MGH 78578)).